A 300-amino-acid polypeptide reads, in one-letter code: tRNA pseudouridine synthase A (300 aa).

The active-site Nucleophile is the D67. Y125 is a binding site for substrate.

Belongs to the tRNA pseudouridine synthase TruA family. Homodimer.

The enzyme catalyses uridine(38/39/40) in tRNA = pseudouridine(38/39/40) in tRNA. Functionally, formation of pseudouridine at positions 38, 39 and 40 in the anticodon stem and loop of transfer RNAs. This Synechococcus sp. (strain CC9902) protein is tRNA pseudouridine synthase A.